Consider the following 225-residue polypeptide: Ras-related protein Rab-32 (225 aa).

A2 is modified (N-acetylalanine). GTP contacts are provided by V36, G37, K38, T39, S40, S51, Q52, Y54, and T57. Residue T39 coordinates Mg(2+). The short motif at 48-62 is the Switch 1 element; the sequence is QLFSQHYRATIGVDF. T57 serves as a coordination point for Mg(2+). S71 is modified (phosphoserine). Residue D81 participates in Mg(2+) binding. Residues G84, N143, K144, D146, A175, and K176 each contribute to the GTP site. A Switch 2 motif is present at residues 84–97; the sequence is GQERFGNMTRVYYK. Positions 178–197 are PKA-RII subunit binding domain; it reads NINIEEAARFLVEKILVNHQ. 2 S-geranylgeranyl cysteine lipidation sites follow: C224 and C225.

Belongs to the small GTPase superfamily. Rab family. In terms of assembly, interacts with ANKRD27. A decreased interaction with ANKRD27 seen in the presence of SGSM2. Interacts with LRRK2 (via N-terminus); this interaction results in stimulation of RAB10 phosphorylation by LRRK2. Mg(2+) is required as a cofactor. In terms of tissue distribution, widely expressed with high levels in heart, liver, kidney, bone marrow, testis, colon and fetal lung.

It is found in the mitochondrion. It localises to the mitochondrion outer membrane. The protein localises to the cytoplasmic vesicle. Its subcellular location is the phagosome. The protein resides in the phagosome membrane. It is found in the melanosome. It localises to the melanosome membrane. It carries out the reaction GTP + H2O = GDP + phosphate + H(+). With respect to regulation, regulated by guanine the nucleotide exchange factor (GEF) BLOC-3 complex composed of HPS1 and HPS4 which promote the exchange of bound GDP for free GTP. Regulated by the GTPase activating protein (GAP) SGSM2/RUTBC1 which increases the GTP hydrolysis activity. Inhibited by GDP dissociation inhibitors (GDIs) which prevent Rab-GDP dissociation. In terms of biological role, the small GTPases Rab are key regulators of intracellular membrane trafficking, from the formation of transport vesicles to their fusion with membranes. Rabs cycle between an inactive GDP-bound form and an active GTP-bound form that is able to recruit to membranes different set of downstream effectors directly responsible for vesicle formation, movement, tethering and fusion. Also acts as an A-kinase anchoring protein by binding to the type II regulatory subunit of protein kinase A and anchoring it to the mitochondrion. Also involved in synchronization of mitochondrial fission. Plays a role in the maturation of phagosomes that engulf pathogens, such as S.aureus and M.tuberculosis. Plays an important role in the control of melanin production and melanosome biogenesis. In concert with RAB38, regulates the proper trafficking of melanogenic enzymes TYR, TYRP1 and DCT/TYRP2 to melanosomes in melanocytes. Stimulates phosphorylation of RAB10 'Thr-73' by LRRK2. The sequence is that of Ras-related protein Rab-32 from Homo sapiens (Human).